The following is an 81-amino-acid chain: Photosystem I iron-sulfur center (81 aa).

4Fe-4S ferredoxin-type domains are found at residues 2-31 (SHAV…MVPW) and 39-68 (IASA…VRVY). The [4Fe-4S] cluster site is built by cysteine 11, cysteine 14, cysteine 17, cysteine 21, cysteine 48, cysteine 51, cysteine 54, and cysteine 58.

As to quaternary structure, the eukaryotic PSI reaction center is composed of at least 11 subunits. The cofactor is [4Fe-4S] cluster.

It is found in the plastid. It localises to the chloroplast thylakoid membrane. The enzyme catalyses reduced [plastocyanin] + hnu + oxidized [2Fe-2S]-[ferredoxin] = oxidized [plastocyanin] + reduced [2Fe-2S]-[ferredoxin]. Apoprotein for the two 4Fe-4S centers FA and FB of photosystem I (PSI); essential for photochemical activity. FB is the terminal electron acceptor of PSI, donating electrons to ferredoxin. The C-terminus interacts with PsaA/B/D and helps assemble the protein into the PSI complex. Required for binding of PsaD and PsaE to PSI. PSI is a plastocyanin/cytochrome c6-ferredoxin oxidoreductase, converting photonic excitation into a charge separation, which transfers an electron from the donor P700 chlorophyll pair to the spectroscopically characterized acceptors A0, A1, FX, FA and FB in turn. The polypeptide is Photosystem I iron-sulfur center (Ostreococcus tauri).